A 2528-amino-acid polypeptide reads, in one-letter code: Reducing polyketide synthase PKS1 (2528 aa).

The region spanning 11 to 436 (ITPIAVVGMS…GANVHAILES (426 aa)) is the Ketosynthase family 3 (KS3) domain. Active-site for beta-ketoacyl synthase activity residues include Cys-186, His-321, and His-359. The segment at 573-868 (FVFTGQGAQW…LGGPISQVID (296 aa)) is malonyl-CoA:ACP transacylase (MAT). The N-terminal hotdog fold stretch occupies residues 954–1092 (LDLIGVFDVH…GLISVLKSSK (139 aa)). A PKS/mFAS DH domain is found at 954 to 1278 (LDLIGVFDVH…LVALDRPNSS (325 aa)). The dehydratase (DH) domain stretch occupies residues 956 to 1277 (LIGVFDVHSS…TLVALDRPNS (322 aa)). His-986 serves as the catalytic Proton acceptor; for dehydratase activity. The interval 1122 to 1278 (KTEWDVKDMY…LVALDRPNSS (157 aa)) is C-terminal hotdog fold. Asp-1187 (proton donor; for dehydratase activity) is an active-site residue. An enoyl reductase (ER) domain region spans residues 1827-2139 (GLLDSLHFTV…TGRHMGKMVA (313 aa)). The interval 2164–2341 (ASYLLVGGVG…ATVIDIGAVH (178 aa)) is ketoreductase (KR) domain. The 78-residue stretch at 2442 to 2519 (SAVTIVLSAL…ALAVKIAARS (78 aa)) folds into the Carrier domain. An O-(pantetheine 4'-phosphoryl)serine modification is found at Ser-2479.

Its pathway is mycotoxin biosynthesis. In terms of biological role, reducing polyketide synthase (PKS); part of the Tox1A locus, one of the 2 loci that mediate the biosynthesis of T-toxin, a family of linear polyketides 37 to 45 carbons in length, of which the major component is 41 carbons, and which leads to high virulence to maize. One of the PKSs (PKS1 or PKS2) could synthesize a precursor, used subsequently by the other PKS as starter unit, to add additional carbons. Variability in the length of the final carbon backbone C35-47 could be achieved by varying the number of condensation cycles, or use of different starter or extender units or might be due to decarboxylation of the penultimate product, catalyzed by DEC1. Additional proteins are required for the biosynthesis of T-toxin, including oxidoreductases RED1, RED2, RED3, LAM1 and OXI1, as well as esterase TOX9. This chain is Reducing polyketide synthase PKS1, found in Cochliobolus heterostrophus (strain C4 / ATCC 48331 / race T) (Southern corn leaf blight fungus).